We begin with the raw amino-acid sequence, 416 residues long: UDP-N-acetylglucosamine 1-carboxyvinyltransferase (416 aa).

Position 22–23 (22–23) interacts with phosphoenolpyruvate; that stretch reads KN. Position 91 (arginine 91) interacts with UDP-N-acetyl-alpha-D-glucosamine. The active-site Proton donor is cysteine 115. Cysteine 115 is subject to 2-(S-cysteinyl)pyruvic acid O-phosphothioketal. UDP-N-acetyl-alpha-D-glucosamine is bound by residues 120–124, aspartate 305, and isoleucine 327; that span reads RPIDL.

This sequence belongs to the EPSP synthase family. MurA subfamily.

The protein resides in the cytoplasm. It carries out the reaction phosphoenolpyruvate + UDP-N-acetyl-alpha-D-glucosamine = UDP-N-acetyl-3-O-(1-carboxyvinyl)-alpha-D-glucosamine + phosphate. It participates in cell wall biogenesis; peptidoglycan biosynthesis. Functionally, cell wall formation. Adds enolpyruvyl to UDP-N-acetylglucosamine. This chain is UDP-N-acetylglucosamine 1-carboxyvinyltransferase, found in Buchnera aphidicola subsp. Acyrthosiphon pisum (strain 5A).